The sequence spans 96 residues: Citrate lyase acyl carrier protein (96 aa).

Ser14 carries the O-(phosphoribosyl dephospho-coenzyme A)serine modification.

Belongs to the CitD family. Oligomer with a subunit composition of (alpha,beta,gamma)6.

The protein localises to the cytoplasm. Covalent carrier of the coenzyme of citrate lyase. This chain is Citrate lyase acyl carrier protein, found in Lactococcus lactis subsp. lactis (strain IL1403) (Streptococcus lactis).